The chain runs to 87 residues: uncharacterized protein (87 aa).

This is an uncharacterized protein from Bacillus subtilis (strain 168).